The sequence spans 344 residues: Trace amine-associated receptor 8c (344 aa).

The Extracellular segment spans residues M1–M36. 2 N-linked (GlcNAc...) asparagine glycosylation sites follow: N4 and N18. 2 disulfide bridges follow: C21-C185 and C96-C189. Residues V37–L57 form a helical membrane-spanning segment. The Cytoplasmic segment spans residues H58–N67. The helical transmembrane segment at F68–S88 threads the bilayer. Residues M89 to T102 are Extracellular-facing. A helical transmembrane segment spans residues F103 to V127. The Cytoplasmic segment spans residues D128 to S146. The helical transmembrane segment at V147–F167 threads the bilayer. Residues Y168 to D196 lie on the Extracellular side of the membrane. Residues W197 to S217 form a helical membrane-spanning segment. The Cytoplasmic segment spans residues K218–T260. A helical transmembrane segment spans residues L261–I281. Residues D282–E295 are Extracellular-facing. The helical transmembrane segment at F296–F319 threads the bilayer. The Cytoplasmic portion of the chain corresponds to R320–E344.

The protein belongs to the G-protein coupled receptor 1 family.

The protein resides in the cell membrane. Its function is as follows. Olfactory receptor activated by trace amines, such as N-methylpiperidine and N,N-dimethylcyclohexylamine. Trace amine compounds are enriched in animal body fluids and act on trace amine-associated receptors (TAARs) to elicit both intraspecific and interspecific innate behaviors. Ligand-binding causes a conformation change that triggers signaling via G(s)-class of G alpha proteins (GNAL or GNAS). This chain is Trace amine-associated receptor 8c, found in Rattus norvegicus (Rat).